Consider the following 82-residue polypeptide: LLAFQVQADPIQNTDEETKTEEQPGEEDQAVSVSFGDPEGTSLQEESLRDLVCYCRKRGCKRREHMNGTCRKGHLLYTLCCR.

Residues 1–8 (LLAFQVQA) form the signal peptide. The tract at residues 1-43 (LLAFQVQADPIQNTDEETKTEEQPGEEDQAVSVSFGDPEGTSL) is disordered. A propeptide spanning residues 9–47 (DPIQNTDEETKTEEQPGEEDQAVSVSFGDPEGTSLQEES) is cleaved from the precursor. 3 disulfides stabilise this stretch: Cys53–Cys81, Cys55–Cys70, and Cys60–Cys80.

Belongs to the alpha-defensin family.

The protein localises to the secreted. Its function is as follows. Probably contributes to the antimicrobial barrier function of the small bowel mucosa. The sequence is that of Alpha-defensin 17 (Defa17) from Mus musculus (Mouse).